A 233-amino-acid chain; its full sequence is Ycf53-like protein (233 aa).

Belongs to the ycf53 family.

This is Ycf53-like protein from Synechocystis sp. (strain ATCC 27184 / PCC 6803 / Kazusa).